The primary structure comprises 136 residues: Piercer of microtubule wall 1 protein (136 aa).

A disordered region spans residues 1 to 24; the sequence is MAEECPRACAEPVAPKATAPPERT.

Belongs to the PIERCE1 family. Microtubule inner protein component of sperm flagellar doublet microtubules. Interacts with CFAP53, ODAD1 and ODAD3; the interactions link the outer dynein arms docking complex (ODA-DC) to the internal microtubule inner proteins (MIP) in cilium axoneme. Expressed in airway epithelial cells.

Its subcellular location is the cytoplasm. The protein localises to the cytoskeleton. It localises to the cilium axoneme. The protein resides in the flagellum axoneme. Its function is as follows. Microtubule inner protein involved in the attachment of outer dynein arms (ODAs) to dynein-decorated doublet microtubules (DMTs) in cilia axoneme, which is required for motile cilia beating. Functions at the initial step of left-right asymmetry specification of the visceral organs. In Homo sapiens (Human), this protein is Piercer of microtubule wall 1 protein.